The chain runs to 461 residues: Juvenile hormone epoxide hydrolase (461 aa).

A helical transmembrane segment spans residues 4–24 (LLFIALPLLVLASIPLYLLVL). Residue Asp-227 is the Nucleophile of the active site. Tyr-373 functions as the Proton donor in the catalytic mechanism. The active-site Proton acceptor is the His-430.

It belongs to the peptidase S33 family. As to quaternary structure, homodimer. Expressed in fat body, foregut and midgut but not in brain, subesophageal ganglia or silk gland of larvae on day 1 of fifth instar.

The protein localises to the microsome membrane. Its subcellular location is the endoplasmic reticulum membrane. The enzyme catalyses cis-stilbene oxide + H2O = (1R,2R)-hydrobenzoin. It catalyses the reaction 1-(4-methoxyphenyl)-N-methyl-N-[(3-methyloxetan-3-yl)methyl]methanamine + H2O = 2-{[(4-methoxybenzyl)(methyl)amino]methyl}-2-methylpropane-1,3-diol. In terms of biological role, catalyzes juvenile hormone hydrolysis. Degrades juvenile hormone III (JH III) about 3 times and 5 times slower than juvenile hormone I (JH I) and II (JH II), respectively. Degrades cis-stilbene oxide and trans-stilbene oxide about 18 and 43 times slower than JH III, respectively. This chain is Juvenile hormone epoxide hydrolase, found in Bombyx mori (Silk moth).